We begin with the raw amino-acid sequence, 301 residues long: MSETPDSPRPVTPGSQASFGTYGGRPVSFVRRGTRLQGRRQAAWEEHAERWAIQVPRHVANTSVHPDYTFDAEAVFGRKAPLIVEIGSGLGDAVVHAAEQNPDKDFLAVEVYTPGLANTIIKINSRGLTNVRVVEANAPEVLESMLPEGSVSELWVFFPDPWHKARHHKRRLIQPAFASVAAKALVKGGYWRIATDWSNYAVHVREVLTGSTEFENMHEGERSGEESPLTQVWQSGVESVVGGAPVREGRAPVSTEHTGPNEGVDEEGGWAPRFDGRIRTSFENKAHEAGRMIFDLTYRKR.

The disordered stretch occupies residues 1-26 (MSETPDSPRPVTPGSQASFGTYGGRP). The S-adenosyl-L-methionine site is built by Glu85, Glu110, Asn137, and Asp160. The active site involves Asp160. Substrate contacts are provided by Lys164 and Asp196. Positions 244 to 270 (APVREGRAPVSTEHTGPNEGVDEEGGW) are disordered. 280–283 (TSFE) contacts substrate.

This sequence belongs to the class I-like SAM-binding methyltransferase superfamily. TrmB family.

It carries out the reaction guanosine(46) in tRNA + S-adenosyl-L-methionine = N(7)-methylguanosine(46) in tRNA + S-adenosyl-L-homocysteine. The protein operates within tRNA modification; N(7)-methylguanine-tRNA biosynthesis. Functionally, catalyzes the formation of N(7)-methylguanine at position 46 (m7G46) in tRNA. The chain is tRNA (guanine-N(7)-)-methyltransferase from Paenarthrobacter aurescens (strain TC1).